Consider the following 237-residue polypeptide: CDP-diacylglycerol--inositol 3-phosphatidyltransferase (237 aa).

Over 1–12 (MGKNEQKDPNVY) the chain is Cytoplasmic. The chain crosses the membrane as a helical span at residues 13 to 33 (FFVPNLIGFTRVFLVLISLYF). Residues 34–41 (MSWHPNYC) are Lumenal-facing. A helical transmembrane segment spans residues 42–62 (TIVYLYSSLLDAFDGWAARKL). Residues aspartate 52 and aspartate 55 each contribute to the Mg(2+) site. Residues glycine 56, arginine 60, and threonine 66 each coordinate a CDP-1,2-diacyl-sn-glycerol. Residues 63 to 71 (HQATNFGAI) lie on the Cytoplasmic side of the membrane. A helical membrane pass occupies residues 72–92 (LDMVTDRCATSCLLCFLCAAY). Positions 73 and 77 each coordinate Mg(2+). The active-site Proton acceptor is the aspartate 77. Residues 93 to 94 (PK) are Lumenal-facing. A helical membrane pass occupies residues 95–115 (YAIIFQLLVSLDLASHYMHMY). The Cytoplasmic portion of the chain corresponds to 116 to 144 (STLHQGASSHKTVTKKHNWMLRLYYGNNK). The chain crosses the membrane as a helical span at residues 145-165 (VLFIFCAANEMFFVALYLLSF). Topologically, residues 166–185 (TPRTPPKLGYLPVPSFIYST) are lumenal. A helical membrane pass occupies residues 186–206 (GELPLSYPTLLAVLCGPICLA). The Cytoplasmic portion of the chain corresponds to 207–237 (KQIINVVQLVNAANALVKMDVEQRRAAKKLQ).

Belongs to the CDP-alcohol phosphatidyltransferase class-I family. It depends on Mn(2+) as a cofactor. Requires Mg(2+) as cofactor.

The protein resides in the microsome membrane. It is found in the endoplasmic reticulum membrane. Its subcellular location is the golgi apparatus membrane. It localises to the mitochondrion outer membrane. The catalysed reaction is a CDP-1,2-diacyl-sn-glycerol + myo-inositol = a 1,2-diacyl-sn-glycero-3-phospho-(1D-myo-inositol) + CMP + H(+). Its function is as follows. Catalyzes the synthesis of phosphatidylinositol (PtdIns). The sequence is that of CDP-diacylglycerol--inositol 3-phosphatidyltransferase (pis1) from Schizosaccharomyces pombe (strain 972 / ATCC 24843) (Fission yeast).